The chain runs to 936 residues: Protocadherin gamma-A10 (936 aa).

The signal sequence occupies residues 1 to 32 (MAAQRNRSKESKDCSGLVLLCLFFGIPWEAGA). 6 consecutive Cadherin domains span residues 33–137 (RQIS…APTF), 138–246 (QAEN…APVF), 247–351 (TLPE…SPEL), 352–456 (TITS…PPTF), 457–566 (SQVS…APEI), and 574–687 (DGST…SPAN). Residues 33 to 696 (RQISYSIPEE…NSETSDLTLY (664 aa)) lie on the Extracellular side of the membrane. A glycan (N-linked (GlcNAc...) asparagine) is linked at Asn-51. Residues Asn-423 and Asn-549 are each glycosylated (N-linked (GlcNAc...) asparagine). Residues 697–717 (LVVAVAAVSCVFLAFVIVLLA) traverse the membrane as a helical segment. The Cytoplasmic segment spans residues 718-936 (LRLRRWHKSR…KKKSGKKEKK (219 aa)). Disordered stretches follow at residues 801 to 845 (SKFP…WPNN) and 906 to 936 (ATLTNAAGKRDGKAPAGGNGNKKKSGKKEKK). The span at 820–845 (WRFSQAQRPGTSGSQNGDDTGTWPNN) shows a compositional bias: polar residues. Over residues 926–936 (NKKKSGKKEKK) the composition is skewed to basic residues.

The protein resides in the cell membrane. Potential calcium-dependent cell-adhesion protein. May be involved in the establishment and maintenance of specific neuronal connections in the brain. This Pan troglodytes (Chimpanzee) protein is Protocadherin gamma-A10 (PCDHGA10).